The sequence spans 519 residues: Cytosol aminopeptidase (519 aa).

Residue S42 is modified to Phosphoserine. K45 is modified (N6-succinyllysine). Phosphoserine is present on S54. N6-succinyllysine is present on residues K61 and K103. A phosphoserine mark is found at S180 and S194. Zn(2+) is bound by residues L202, M203, and T205. An N6-acetyllysine; alternate modification is found at K221. K221 bears the N6-succinyllysine; alternate mark. At S238 the chain carries Phosphoserine. Positions 282 and 287 each coordinate Zn(2+). 4 residues coordinate substrate: K282, D287, S292, and K294. D287 is a binding site for Mg(2+). K294 is a catalytic residue. Residues R303, D305, D364, and E366 each contribute to the Zn(2+) site. Substrate contacts are provided by D305 and D364. The Mg(2+) site is built by D364 and E366. The active site involves R368. Residue K455 is modified to N6-acetyllysine; alternate. At K455 the chain carries N6-succinyllysine; alternate. K476 is subject to N6-succinyllysine. K489 is modified (N6-acetyllysine; alternate). K489 is modified (N6-succinyllysine; alternate).

The protein belongs to the peptidase M17 family. As to quaternary structure, homohexamer. The cofactor is Zn(2+). Requires Mn(2+) as cofactor.

The protein resides in the cytoplasm. The catalysed reaction is Release of an N-terminal amino acid, Xaa-|-Yaa-, in which Xaa is preferably Leu, but may be other amino acids including Pro although not Arg or Lys, and Yaa may be Pro. Amino acid amides and methyl esters are also readily hydrolyzed, but rates on arylamides are exceedingly low.. It catalyses the reaction an S-substituted L-cysteinylglycine + H2O = an S-substituted L-cysteine + glycine. The enzyme catalyses L-cysteinylglycine + H2O = L-cysteine + glycine. It carries out the reaction S-benzyl-L-cysteinylglycine + H2O = S-benzyl-L-cysteine + glycine. The catalysed reaction is Release of N-terminal proline from a peptide.. Cytosolic metallopeptidase that catalyzes the removal of unsubstituted N-terminal hydrophobic amino acids from various peptides. The presence of Zn(2+) ions is essential for the peptidase activity, and the association with other cofactors can modulate the substrate spectificity of the enzyme. For instance, in the presence of Mn(2+), it displays a specific Cys-Gly hydrolyzing activity of Cys-Gly-S-conjugates. Involved in the metabolism of glutathione and in the degradation of glutathione S-conjugates, which may play a role in the control of the cell redox status. The protein is Cytosol aminopeptidase of Sus scrofa (Pig).